The sequence spans 498 residues: Lycopene beta cyclase, chloroplastic/chromoplastic (498 aa).

A chloroplast and chromoplast-targeting transit peptide spans 1-79; sequence MDTLLRTPNN…ELPMYDPSKG (79 aa). 84–112 lines the NAD(+) pocket; the sequence is LAVVGGGPAGLAVAQQVSEAGLSVCSIDP. The short motif at 293–297 is the FLEET motif element; sequence FLEET.

It belongs to the lycopene cyclase family. In terms of assembly, monomer. The cofactor is FAD. It depends on NADPH as a cofactor.

It is found in the plastid. The protein resides in the chloroplast. The protein localises to the chromoplast. It carries out the reaction a carotenoid psi-end group = a carotenoid beta-end derivative. The enzyme catalyses all-trans-lycopene = gamma-carotene. It catalyses the reaction gamma-carotene = all-trans-beta-carotene. The catalysed reaction is all-trans-neurosporene = beta-zeacarotene. It carries out the reaction beta-zeacarotene = 7,8-dihydro-beta-carotene. Its pathway is carotenoid biosynthesis; beta-carotene biosynthesis. The protein operates within carotenoid biosynthesis; beta-zeacarotene biosynthesis. Its function is as follows. Catalyzes the double cyclization reaction which converts lycopene to beta-carotene. Catalyzes the double cyclization reaction which converts neurosporene to 7,8-dihydro-beta-carotene. The chain is Lycopene beta cyclase, chloroplastic/chromoplastic from Capsicum annuum (Capsicum pepper).